The sequence spans 453 residues: Protein LIAT1 (453 aa).

Positions 1 to 152 (METRGPGLAV…HLPSDSSTVS (152 aa)) are disordered. The tract at residues 82 to 103 (KRKVKKKKRKKKTKGSGKGDDK) is lysine-rich domain. A compositionally biased stretch (basic residues) spans 83–96 (RKVKKKKRKKKTKG). Over residues 106–117 (SQSLKSQPLSSS) the composition is skewed to low complexity. Residues 125–145 (CKERGPKPEHRQSKVEKKHLP) are compositionally biased toward basic and acidic residues. Residues 145–197 (PSDSSTVSLPDFAEIENLANRINESLRWDGILADPEAEKERIRIYKLNRRKRY) are interaction with ATE1. A run of 20 repeats spans residues 201–210 (ALKGFHPDPE), 211–220 (ALKGFHPDPD), 221–230 (ALKGFHPDPE), 231–240 (ALKGFHPDPE), 241–250 (ALKGFHPDPE), 251–260 (ALKGFHPDPE), 261–270 (ALKGIHPDPE), 271–280 (ALKGIHPDPE), 281–290 (ALKGFHPDPE), 291–300 (ALKGFHPDPE), 301–310 (ALKGFHTDPE), 311–320 (ALKGFHIDPE), 321–330 (ALKGFHPDPK), 331–340 (ALKGFHPDPK), 341–350 (ALKGFHTDPE), 351–360 (ALKGFHPDPK), 361–370 (ALKGFHPDPE), 371–380 (ALKGFHPDPE), 381–390 (ALKGFHPDPE), and 391–400 (ALKGFHTDPN). The tract at residues 201-400 (ALKGFHPDPE…ALKGFHTDPN (200 aa)) is 20 X 10 AA approximate tandem repeat of A-L-K-G-F-H-P-D-P-E. Disordered regions lie at residues 225–306 (FHPD…KGFH) and 320–432 (EALK…CPNL). The segment covering 320–396 (EALKGFHPDP…PDPEALKGFH (77 aa)) has biased composition (basic and acidic residues).

Self-associates (via Lys-rich domain); targets LIAT1 to the nucleolus. Interacts with ATE1; it is not a substrate of ATE1, the interaction takes place in the cytoplasm and seems to increase ATE1 arginyltransferase activity. Interacts with JMJD6 and MRPS14. Post-translationally modified by JMJD6 lysyl-hydroxylase activity at its Lys-rich domain, which inhibits its self-association and nucleolar localization.

The protein resides in the nucleus. It is found in the nucleolus. Its subcellular location is the cytoplasm. Functionally, participates in nucleolar liquid-liquid phase separation (LLPS) through its N-terminal intrinsically disordered region (IDR). May be involved in ATE1-mediated N-terminal arginylation. This Homo sapiens (Human) protein is Protein LIAT1.